The following is an 857-amino-acid chain: DNA mismatch repair protein MutS (857 aa).

ATP is bound at residue 603-610; sequence GPNMAGKS.

This sequence belongs to the DNA mismatch repair MutS family.

Functionally, this protein is involved in the repair of mismatches in DNA. It is possible that it carries out the mismatch recognition step. This protein has a weak ATPase activity. The polypeptide is DNA mismatch repair protein MutS (Methanothrix thermoacetophila (strain DSM 6194 / JCM 14653 / NBRC 101360 / PT) (Methanosaeta thermophila)).